Here is a 137-residue protein sequence, read N- to C-terminus: NADPH-dependent 7-cyano-7-deazaguanine reductase (137 aa).

Cys-51 (thioimide intermediate) is an active-site residue. The active-site Proton donor is the Asp-58. Substrate contacts are provided by residues 73-75 (VEL) and 92-93 (HE).

It belongs to the GTP cyclohydrolase I family. QueF type 1 subfamily.

Its subcellular location is the cytoplasm. It carries out the reaction 7-aminomethyl-7-carbaguanine + 2 NADP(+) = 7-cyano-7-deazaguanine + 2 NADPH + 3 H(+). Its pathway is tRNA modification; tRNA-queuosine biosynthesis. Catalyzes the NADPH-dependent reduction of 7-cyano-7-deazaguanine (preQ0) to 7-aminomethyl-7-deazaguanine (preQ1). The polypeptide is NADPH-dependent 7-cyano-7-deazaguanine reductase (Gloeobacter violaceus (strain ATCC 29082 / PCC 7421)).